Consider the following 195-residue polypeptide: Exosome complex component CSL4 (195 aa).

2 positions are modified to phosphoserine: Ser21 and Ser98. The 82-residue stretch at Asp66–Ala147 folds into the S1 motif domain.

The protein belongs to the CSL4 family. In terms of assembly, component of the RNA exosome core complex (Exo-9), composed of EXOSC1, EXOSC2, EXOSC3, EXOSC4, EXOSC5, EXOSC6, EXOSC7, EXOSC8 and EXOSC9; within the complex interacts with EXOSC6. The catalytically inactive RNA exosome core complex (Exo-9) associates with the catalytic subunit EXOSC10/RRP6. Exo-9 may associate with DIS3 to form the nucleolar exosome complex, or DIS3L to form the cytoplasmic exosome complex. Exo-9 is formed by a hexameric base ring consisting of the heterodimers EXOSC4-EXOSC9, EXOSC5-EXOSC8 and EXOSC6-EXOSC7, and a cap ring consisting of EXOSC1, EXOSC2 and EXOSC3. The RNA exosome complex associates with cofactors C1D/RRP47, MPHOSPH6/MPP6 and MTREX/MTR4. Interacts with DDX60.

The protein resides in the nucleus. It is found in the nucleolus. Its subcellular location is the cytoplasm. Its function is as follows. Non-catalytic component of the RNA exosome complex which has 3'-&gt;5' exoribonuclease activity and participates in a multitude of cellular RNA processing and degradation events. In the nucleus, the RNA exosome complex is involved in proper maturation of stable RNA species such as rRNA, snRNA and snoRNA, in the elimination of RNA processing by-products and non-coding 'pervasive' transcripts, such as antisense RNA species and promoter-upstream transcripts (PROMPTs), and of mRNAs with processing defects, thereby limiting or excluding their export to the cytoplasm. The RNA exosome may be involved in Ig class switch recombination (CSR) and/or Ig variable region somatic hypermutation (SHM) by targeting AICDA deamination activity to transcribed dsDNA substrates. In the cytoplasm, the RNA exosome complex is involved in general mRNA turnover and specifically degrades inherently unstable mRNAs containing AU-rich elements (AREs) within their 3' untranslated regions, and in RNA surveillance pathways, preventing translation of aberrant mRNAs. It seems to be involved in degradation of histone mRNA. The catalytic inactive RNA exosome core complex of 9 subunits (Exo-9) is proposed to play a pivotal role in the binding and presentation of RNA for ribonucleolysis, and to serve as a scaffold for the association with catalytic subunits and accessory proteins or complexes. EXOSC1 as peripheral part of the Exo-9 complex stabilizes the hexameric ring of RNase PH-domain subunits through contacts with EXOSC6 and EXOSC8. This chain is Exosome complex component CSL4 (EXOSC1), found in Homo sapiens (Human).